We begin with the raw amino-acid sequence, 190 residues long: MAGSRLETVGSIFTRTRDLIRAGVLKEKPLWFDVYNAFPPLREPVFRRPRLRYGKAKSPTQDIYYHEDQIRAKFYAAYGSGPKAFDLFNPNFKSTCQRFVEKYIELQKLGETDEEKLFVEAGKALLAEGVILRRVEKARTQQEGSQVSRKSESMGVESQTALEENPPLKEVPQAQHLESPGEESKGLSPP.

N-acetylalanine is present on A2. K83 is modified (N6-succinyllysine). Position 102 is an N6-acetyllysine (K102). The interval 137–190 (KARTQQEGSQVSRKSESMGVESQTALEENPPLKEVPQAQHLESPGEESKGLSPP) is disordered.

The protein belongs to the mitochondrion-specific ribosomal protein mS23 family. As to quaternary structure, component of the mitochondrial ribosome small subunit (28S) which comprises a 12S rRNA and about 30 distinct proteins.

Its subcellular location is the mitochondrion. The protein is Small ribosomal subunit protein mS23 of Bos taurus (Bovine).